We begin with the raw amino-acid sequence, 124 residues long: MKKLATAAAVAALLGASASASAWWGPGWGGPGYGSGMGDWMNDMFGDGYGDFNMSMSGGGRGYGRGNGYGRGYGYGNPYYGYGYPYYGGYGAPYGAYGAPYAFPYGAPYGAPVAPAAPAQSESK.

The signal sequence occupies residues 1–22 (MKKLATAAAVAALLGASASASA).

The protein envelope of the sulfur globules is composed of the three different proteins CV1, CV2 and CV3.

Functionally, structural protein of the sulfur globules, which are intracellular globules that serve for sulfur storage in purple sulfur bacteria. In Allochromatium vinosum (strain ATCC 17899 / DSM 180 / NBRC 103801 / NCIMB 10441 / D) (Chromatium vinosum), this protein is Sulfur globule protein CV2 (sgpB).